The chain runs to 183 residues: Protein GrpE (183 aa).

Residues 1 to 14 (MSNEENKINEEALK) show a composition bias toward basic and acidic residues. Positions 1–20 (MSNEENKINEEALKQQDAAE) are disordered.

The protein belongs to the GrpE family. In terms of assembly, homodimer.

The protein localises to the cytoplasm. Functionally, participates actively in the response to hyperosmotic and heat shock by preventing the aggregation of stress-denatured proteins, in association with DnaK and GrpE. It is the nucleotide exchange factor for DnaK and may function as a thermosensor. Unfolded proteins bind initially to DnaJ; upon interaction with the DnaJ-bound protein, DnaK hydrolyzes its bound ATP, resulting in the formation of a stable complex. GrpE releases ADP from DnaK; ATP binding to DnaK triggers the release of the substrate protein, thus completing the reaction cycle. Several rounds of ATP-dependent interactions between DnaJ, DnaK and GrpE are required for fully efficient folding. This Vibrio vulnificus (strain CMCP6) protein is Protein GrpE.